A 599-amino-acid chain; its full sequence is MLGMYVPDRFALKSSRVQDGMGLYTARRVRKGEKFGPFAGEKRMPEDLDENMDYRLMWEVRGSKGEVLYILDATNPRHSNWLRFVHEAPSQERKNLAAIQEGENIFYLAVDDIETDTELLIGYLDSDVEAEEEEQQALTMTKEGKVDHSKGQLAAGSKGHLGCEEDFACPQCESSFPSEEVLTEHLQSLHQKPTGEKEFKCENCGKKFPVRQALQRHFEQHRKACRGEARFVCKADSCGKRLKSKDALRRHQENVHTGDPKRKLICSVCNRKCTSVSSLQEHRKIHEIFDCQECMKKFISANQLKRHMITHSEKRPYNCEICNKSFKRLDQVGAHKVIHSEDKPYQCKLCGKGFAHRNVYKNHKKTHSEERPFQCDACKALFRTPFSLQRHLLIHNSERTFKCHHCDATFKRKDTLNVHVQVVHERHKKYRCELCNKAFVTPSVLRSHKKTHTGEKEKVCPYCGQKFASSGTLRVHIRSHTGERPYQCPYCEKGFSKNDGLKMHIRTHTREKPYQCSECSKAFSQKRGLDEHKRTHTGEKPFQCDVCDLAFSLKKMLIRHKMTHNPNRPMAECHFCHKKFTRNDYLKVHMDNIHGVADS.

In terms of domain architecture, SET spans 8-124; that stretch reads DRFALKSSRV…TDTELLIGYL (117 aa). 12 C2H2-type zinc fingers span residues 167–190, 199–221, 231–256, 264–286, 289–311, 317–339, 345–367, 373–395, 401–424, 430–452, 458–480, and 486–508; these read FACP…QSLH, FKCE…FEQH, FVCK…ENVH, LICS…RKIH, FDCQ…MITH, YNCE…KVIH, YQCK…KKTH, FQCD…LLIH, FKCH…QVVH, YRCE…KKTH, KVCP…IRSH, and YQCP…IRTH. Residues 514-536 form a C2H2-type 13; degenerate zinc finger; that stretch reads YQCSECSKAFSQKRGLDEHKRTH. 2 consecutive C2H2-type zinc fingers follow at residues 542–564 and 571–594; these read FQCD…KMTH and AECH…DNIH.

This sequence belongs to the class V-like SAM-binding methyltransferase superfamily. Interacts with EHMT2/G9A, GFI1 and HDAC1.

It localises to the nucleus. Its function is as follows. Sequence-specific DNA-binding transcription factor. Represses transcription at least in part by recruitment of the histone methyltransferase EHMT2/G9A and histone deacetylases such as HDAC1. Regulates hematopoiesis-associated protein-coding and microRNA (miRNA) genes. May regulate the expression of proteins involved in extracellular matrix development and maintenance, connective tissue components and molecules regulating cell migration and adhesion. May cause G2/M arrest and apoptosis in cancer cells. This Mus musculus (Mouse) protein is PR domain zinc finger protein 5 (Prdm5).